Reading from the N-terminus, the 128-residue chain is Sulfurtransferase TusD (128 aa).

The active-site Cysteine persulfide intermediate is cysteine 78.

It belongs to the DsrE/TusD family. As to quaternary structure, heterohexamer, formed by a dimer of trimers. The hexameric TusBCD complex contains 2 copies each of TusB, TusC and TusD. The TusBCD complex interacts with TusE.

It localises to the cytoplasm. Its function is as follows. Part of a sulfur-relay system required for 2-thiolation of 5-methylaminomethyl-2-thiouridine (mnm(5)s(2)U) at tRNA wobble positions. Accepts sulfur from TusA and transfers it in turn to TusE. The polypeptide is Sulfurtransferase TusD (Escherichia coli (strain 55989 / EAEC)).